Consider the following 339-residue polypeptide: Foldase protein PrsA (339 aa).

The signal sequence occupies residues M1–G26. C27 is lipidated: N-palmitoyl cysteine. C27 carries the S-diacylglycerol cysteine lipid modification. The region spanning K197–D287 is the PpiC domain.

It belongs to the PrsA family.

It localises to the cell membrane. The catalysed reaction is [protein]-peptidylproline (omega=180) = [protein]-peptidylproline (omega=0). Functionally, plays a major role in protein secretion by helping the post-translocational extracellular folding of several secreted proteins. This is Foldase protein PrsA from Clostridium tetani (strain Massachusetts / E88).